A 402-amino-acid chain; its full sequence is Serine/threonine-protein kinase US3 homolog (402 aa).

Disordered stretches follow at residues 1-21 (MSSTPEAETMECGISSSKVHD) and 46-88 (FPDS…SPET). The Protein kinase domain maps to 102 to 386 (YNIVSSLPPG…AQDILMLPLF (285 aa)). ATP-binding positions include 110–118 (PGSEGYIYV) and K127. Residue D218 is the Proton acceptor of the active site.

The protein belongs to the protein kinase superfamily. Ser/Thr protein kinase family. Post-translationally, phosphorylated by UL13 homolog; this phosphorylation regulates subsequent phosphorylation of UL31 and UL34 homologs by US3. Autophosphorylated.

Its subcellular location is the host cytoplasm. The protein localises to the host nucleus. It catalyses the reaction L-seryl-[protein] + ATP = O-phospho-L-seryl-[protein] + ADP + H(+). The catalysed reaction is L-threonyl-[protein] + ATP = O-phospho-L-threonyl-[protein] + ADP + H(+). Multifunctional serine/threonine kinase that plays a role in several processes including egress of virus particles from the nucleus, modulation of the actin cytoskeleton and inhibition of apoptosis. Phosphorylates UL31 and UL34 homologs, two critical regulators of capsid budding from nucleus to endoplasmic reticulum, thereby facilitating virion egress. Modulates and redistributes host components of the nuclear envelope, including LMNA, emerin/EMD and the nuclear matrix protein MATR3. Phosphorylates envelope glycoprotein B (gB), probably to direct it to the cell surface. Promotes virus intracellular spread by restructuring host cell cytoskeleton. Blocks host apoptosis to extend cell survival and allow efficient viral replication. Promotes viral gene expression by phosphorylating host HDAC2 to reduce viral genome silencing. The chain is Serine/threonine-protein kinase US3 homolog (US1206) from Gallid herpesvirus 2 (strain GA) (GaHV-2).